Reading from the N-terminus, the 134-residue chain is Terepressin/terephysin (134 aa).

The N-terminal stretch at 1–33 is a signal peptide; it reads MKCSVLQMSRLSWTACVLLLPLLLLTLQGGVQG. A disulfide bridge links Cys34 with Cys39. Residues 44–50 constitute a propeptide that is removed on maturation; the sequence is KRAVDSV. Intrachain disulfides connect Cys56–Cys100, Cys59–Cys73, Cys67–Cys90, Cys74–Cys80, Cys107–Cys121, Cys115–Cys133, and Cys122–Cys127.

The protein belongs to the vasopressin/oxytocin family. Post-translationally, contains 7 disulfide bonds. In terms of tissue distribution, expressed by the venom duct.

Its subcellular location is the secreted. This chain is Terepressin/terephysin, found in Terebra anilis (Auger snail).